A 414-amino-acid chain; its full sequence is Enolase (414 aa).

Gln162 contacts (2R)-2-phosphoglycerate. Glu204 serves as the catalytic Proton donor. Positions 239, 280, and 307 each coordinate Mg(2+). The (2R)-2-phosphoglycerate site is built by Lys332, Arg361, Ser362, and Lys383. Lys332 functions as the Proton acceptor in the catalytic mechanism.

The protein belongs to the enolase family. Requires Mg(2+) as cofactor.

Its subcellular location is the cytoplasm. The protein localises to the secreted. It is found in the cell surface. The enzyme catalyses (2R)-2-phosphoglycerate = phosphoenolpyruvate + H2O. It functions in the pathway carbohydrate degradation; glycolysis; pyruvate from D-glyceraldehyde 3-phosphate: step 4/5. Catalyzes the reversible conversion of 2-phosphoglycerate (2-PG) into phosphoenolpyruvate (PEP). It is essential for the degradation of carbohydrates via glycolysis. This is Enolase from Campylobacter jejuni subsp. jejuni serotype O:2 (strain ATCC 700819 / NCTC 11168).